Consider the following 332-residue polypeptide: Biotin synthase (332 aa).

A Radical SAM core domain is found at 53-282 (HFGKKVKLNM…TKEIRISGGR (230 aa)). [4Fe-4S] cluster contacts are provided by cysteine 71, cysteine 75, and cysteine 78. [2Fe-2S] cluster contacts are provided by cysteine 115, cysteine 147, cysteine 207, and arginine 277.

This sequence belongs to the radical SAM superfamily. Biotin synthase family. As to quaternary structure, homodimer. Requires [4Fe-4S] cluster as cofactor. It depends on [2Fe-2S] cluster as a cofactor.

The catalysed reaction is (4R,5S)-dethiobiotin + (sulfur carrier)-SH + 2 reduced [2Fe-2S]-[ferredoxin] + 2 S-adenosyl-L-methionine = (sulfur carrier)-H + biotin + 2 5'-deoxyadenosine + 2 L-methionine + 2 oxidized [2Fe-2S]-[ferredoxin]. It participates in cofactor biosynthesis; biotin biosynthesis; biotin from 7,8-diaminononanoate: step 2/2. In terms of biological role, catalyzes the conversion of dethiobiotin (DTB) to biotin by the insertion of a sulfur atom into dethiobiotin via a radical-based mechanism. This Bacillus cereus (strain B4264) protein is Biotin synthase.